A 207-amino-acid chain; its full sequence is Large ribosomal subunit protein uL4 (207 aa).

The segment at 53-76 (NRSAVRGGGRKPWRQKGTGRARQG) is disordered. A compositionally biased stretch (basic residues) spans 60-71 (GGRKPWRQKGTG).

The protein belongs to the universal ribosomal protein uL4 family. Part of the 50S ribosomal subunit.

In terms of biological role, one of the primary rRNA binding proteins, this protein initially binds near the 5'-end of the 23S rRNA. It is important during the early stages of 50S assembly. It makes multiple contacts with different domains of the 23S rRNA in the assembled 50S subunit and ribosome. Its function is as follows. Forms part of the polypeptide exit tunnel. The polypeptide is Large ribosomal subunit protein uL4 (Staphylococcus saprophyticus subsp. saprophyticus (strain ATCC 15305 / DSM 20229 / NCIMB 8711 / NCTC 7292 / S-41)).